A 635-amino-acid chain; its full sequence is Cationic amino acid transporter 4 (635 aa).

Helical transmembrane passes span 42–62 (LTLL…TGAV), 66–86 (VAGP…LLAA), and 113–133 (LWAF…GAAV). 2 N-linked (GlcNAc...) asparagine glycosylation sites follow: asparagine 151 and asparagine 195. A helical transmembrane segment spans residues 197–217 (TFSAISLLVILFIVILGFILA). N-linked (GlcNAc...) asparagine glycosylation is present at asparagine 221. Transmembrane regions (helical) follow at residues 229-249 (FAPF…YAFV), 270-290 (LAIA…STVL), 318-338 (GFIV…SLLF), 365-385 (QVPV…ALLL), and 391-411 (VQFL…SIIV). A phosphoserine mark is found at serine 422 and serine 427. A helical membrane pass occupies residues 478–498 (VTWALGVMLASAITIGCVLVF). Asparagine 500 is a glycosylation site (N-linked (GlcNAc...) asparagine). Helical transmembrane passes span 508–528 (WGYI…LLVL), 539–559 (LFQI…NICL), and 567–587 (TWVR…GYGI). A glycan (N-linked (GlcNAc...) asparagine) is linked at asparagine 601.

The protein belongs to the amino acid-polyamine-organocation (APC) superfamily. Cationic amino acid transporter (CAT) (TC 2.A.3.3) family.

The protein localises to the membrane. In terms of biological role, involved in the transport of the cationic amino acids (arginine, lysine and ornithine). This chain is Cationic amino acid transporter 4 (SLC7A4), found in Homo sapiens (Human).